A 338-amino-acid polypeptide reads, in one-letter code: Tryptophan--tRNA ligase (338 aa).

ATP is bound by residues 11–13 (QPS) and 19–20 (GN). The short motif at 12-20 (PSGELSIGN) is the 'HIGH' region element. Asp135 contacts L-tryptophan. Residues 147–149 (GSD), Val189, and 198–202 (KMSKS) each bind ATP. The 'KMSKS' region motif lies at 198–202 (KMSKS).

The protein belongs to the class-I aminoacyl-tRNA synthetase family. As to quaternary structure, homodimer.

It localises to the cytoplasm. It catalyses the reaction tRNA(Trp) + L-tryptophan + ATP = L-tryptophyl-tRNA(Trp) + AMP + diphosphate + H(+). Its function is as follows. Catalyzes the attachment of tryptophan to tRNA(Trp). In Vibrio parahaemolyticus serotype O3:K6 (strain RIMD 2210633), this protein is Tryptophan--tRNA ligase.